Consider the following 174-residue polypeptide: Large ribosomal subunit protein bL12cy (174 aa).

Residues 1 to 45 constitute a chloroplast transit peptide; the sequence is MASTTFSSAFSILSLPSSSPSPPPWAPRTLPVANRRRRAAAVAST.

This sequence belongs to the bacterial ribosomal protein bL12 family.

It is found in the plastid. Its subcellular location is the chloroplast. In Secale cereale (Rye), this protein is Large ribosomal subunit protein bL12cy (RPL12-2).